A 376-amino-acid polypeptide reads, in one-letter code: MTRASSFRLDATSGKARTGVIQTPRGDIRTPAFMPVGTAATVKAMMPESVAATGADILLGNTYHLMLRPTAERIANLGGLHSFMNWDKPILTDSGGFQVMSLADLRKLTEEGVTFRSHIDGSKHLLSPERSMEIQKLLGSDIVMCFDECPALPADRKALDDSMRLSMRWAARSKEAFGDRPGYALFGIQQGGLEEDLREESAKALREIGFDGYAVGGLAVGEGQAAMFGCLDFAPDQLPTDKPRYLMGVGKPDDIVGAVKRGIDMMDCVLPSRSGRTGQAWTRRGQVNIKNARHADDPRPLDEDCTCPACRNYSRAYLHHVFRAQEMISGMLLTWHNLHYYQELMQTMRDAIAANDFAGFEARFHADRAEGDIVPL.

The active-site Proton acceptor is D93. Substrate is bound by residues 93 to 97 (DSGGF), D147, Q190, and G217. The RNA binding stretch occupies residues 248–254 (GVGKPDD). Catalysis depends on D267, which acts as the Nucleophile. 4 residues coordinate Zn(2+): C305, C307, C310, and H336.

The protein belongs to the queuine tRNA-ribosyltransferase family. As to quaternary structure, homodimer. Within each dimer, one monomer is responsible for RNA recognition and catalysis, while the other monomer binds to the replacement base PreQ1. It depends on Zn(2+) as a cofactor.

It carries out the reaction 7-aminomethyl-7-carbaguanine + guanosine(34) in tRNA = 7-aminomethyl-7-carbaguanosine(34) in tRNA + guanine. It participates in tRNA modification; tRNA-queuosine biosynthesis. Its function is as follows. Catalyzes the base-exchange of a guanine (G) residue with the queuine precursor 7-aminomethyl-7-deazaguanine (PreQ1) at position 34 (anticodon wobble position) in tRNAs with GU(N) anticodons (tRNA-Asp, -Asn, -His and -Tyr). Catalysis occurs through a double-displacement mechanism. The nucleophile active site attacks the C1' of nucleotide 34 to detach the guanine base from the RNA, forming a covalent enzyme-RNA intermediate. The proton acceptor active site deprotonates the incoming PreQ1, allowing a nucleophilic attack on the C1' of the ribose to form the product. After dissociation, two additional enzymatic reactions on the tRNA convert PreQ1 to queuine (Q), resulting in the hypermodified nucleoside queuosine (7-(((4,5-cis-dihydroxy-2-cyclopenten-1-yl)amino)methyl)-7-deazaguanosine). This chain is Queuine tRNA-ribosyltransferase, found in Jannaschia sp. (strain CCS1).